A 448-amino-acid polypeptide reads, in one-letter code: Trigger factor (448 aa).

Residues 172–257 (GDRVTVDFVG…MKKIEWPHLP (86 aa)) enclose the PPIase FKBP-type domain.

It belongs to the FKBP-type PPIase family. Tig subfamily.

The protein localises to the cytoplasm. It catalyses the reaction [protein]-peptidylproline (omega=180) = [protein]-peptidylproline (omega=0). Its function is as follows. Involved in protein export. Acts as a chaperone by maintaining the newly synthesized protein in an open conformation. Functions as a peptidyl-prolyl cis-trans isomerase. The sequence is that of Trigger factor from Paraburkholderia phymatum (strain DSM 17167 / CIP 108236 / LMG 21445 / STM815) (Burkholderia phymatum).